The sequence spans 73 residues: MAPQTLLLVLVLCVLLLQAQGGYRDKMRMQRIKVCEKRPSIDLCIHHCSYFQKCETNKICCSAFCGNICMSIL.

The signal sequence occupies residues Met-1–Gly-21. Residues Arg-28–Leu-73 form the WAP domain.

In terms of tissue distribution, ubiquitously expressed.

The protein resides in the secreted. The sequence is that of Protein WFDC10B (WFDC10B) from Homo sapiens (Human).